The primary structure comprises 182 residues: UPF0397 protein BT9727_2423 (182 aa).

5 consecutive transmembrane segments (helical) span residues 9–29, 40–60, 71–91, 114–134, and 142–162; these read VVAI…GFSI, AILT…IGLI, WGIW…MGFI, ITGL…DIIV, and IVIQ…VLGL.

The protein belongs to the UPF0397 family.

It is found in the cell membrane. This chain is UPF0397 protein BT9727_2423, found in Bacillus thuringiensis subsp. konkukian (strain 97-27).